Consider the following 182-residue polypeptide: MIQTLDRLMTNPMPEGRVEDILRPEGENPLLEKGYVTTSVDALLNWARTGSMWPMTFGLACCAVEMMHAGASRLDLDRYGVVFRPSPRQSDVMIVAGTLVNKMAPALRKVYDQMPDPKWVISMGSCANGGGYYHYSYSVVRGCDRIVPVDIYVPGCPPTAEALVYGILQLQKKIWRTQTIAR.

The [4Fe-4S] cluster site is built by Cys61, Cys62, Cys126, and Cys156.

This sequence belongs to the complex I 20 kDa subunit family. NDH-1 is composed of 14 different subunits. Subunits NuoB, C, D, E, F, and G constitute the peripheral sector of the complex. It depends on [4Fe-4S] cluster as a cofactor.

It is found in the cell inner membrane. It carries out the reaction a quinone + NADH + 5 H(+)(in) = a quinol + NAD(+) + 4 H(+)(out). NDH-1 shuttles electrons from NADH, via FMN and iron-sulfur (Fe-S) centers, to quinones in the respiratory chain. The immediate electron acceptor for the enzyme in this species is believed to be ubiquinone. Couples the redox reaction to proton translocation (for every two electrons transferred, four hydrogen ions are translocated across the cytoplasmic membrane), and thus conserves the redox energy in a proton gradient. The protein is NADH-quinone oxidoreductase subunit B of Xanthomonas oryzae pv. oryzae (strain PXO99A).